A 124-amino-acid chain; its full sequence is U33-theraphotoxin-Cg1c (124 aa).

The signal sequence occupies residues 1–17 (MKFAVAIAFTLLVCVFA). Cystine bridges form between Cys-26-Cys-37, Cys-31-Cys-51, Cys-36-Cys-75, Cys-61-Cys-83, and Cys-77-Cys-94. The span at 93–108 (RCQEESGKSDKSKESQ) shows a compositional bias: basic and acidic residues. The disordered stretch occupies residues 93–124 (RCQEESGKSDKSKESQGSDESEESEESKESSG). Residues 109 to 118 (GSDESEESEE) are compositionally biased toward acidic residues.

The protein belongs to the neurotoxin 32 family. Expressed by the venom gland.

The protein resides in the secreted. This Chilobrachys guangxiensis (Chinese earth tiger tarantula) protein is U33-theraphotoxin-Cg1c.